A 250-amino-acid polypeptide reads, in one-letter code: Osmotin-like protein OSML15 (250 aa).

The first 21 residues, 1 to 21 (MSHLTTCLVFFLLAFVTYTNA), serve as a signal peptide directing secretion. Cystine bridges form between cysteine 31–cysteine 226, cysteine 73–cysteine 83, cysteine 88–cysteine 94, cysteine 142–cysteine 214, cysteine 147–cysteine 197, cysteine 155–cysteine 165, cysteine 169–cysteine 178, and cysteine 179–cysteine 184.

The protein belongs to the thaumatin family.

The sequence is that of Osmotin-like protein OSML15 from Solanum commersonii (Commerson's wild potato).